The following is an 83-amino-acid chain: Protein WFDC9 (83 aa).

The N-terminal stretch at 1 to 24 is a signal peptide; the sequence is MKPWIIVLTVSAHGILVFLHVLGS.

It is found in the secreted. This is Protein WFDC9 (Wfdc9) from Mus musculus (Mouse).